Consider the following 419-residue polypeptide: Methyltransferase/ribosomally synthesized type I borosin cyclic peptide precursor gjuMa (419 aa).

Residues 1–255 (MATPIATTTN…AISTLYVPPR (255 aa)) form a methyltransferase domain region. Residues R79, Y83, and Y105 contribute to the active site. S-adenosyl-L-methionine-binding residues include Y105, H107, V110, A137, Q179, G217, S248, and T249. Residues 256-381 (DISPVDPTMA…GAVYALMSRP (126 aa)) are clasp domain. Residues 382–404 (TGDIAREKELTNDEIANNHGAPY) are precursor leader. S408 is subject to N-methylserine. N-methylalanine is present on A409. V410 is subject to N-methylvaline. Residues I411 and I412 each carry the N-methylisoleucine modification. N-methylalanine occurs at positions 413 and 414. N-methylisoleucine occurs at positions 415 and 416.

In the N-terminal section; belongs to the precorrin methyltransferase family. In terms of assembly, homodimer. GjuMA automethylates at Ser-408, Ala-409, Val-410, Ile-411, Ile-412, Ala-413, Ala-414, Ile-415 and Ile-416 before being processed by ae prolyloligopeptidase which likely forms a peptidyl ester upon removal of the follower propeptide, which then undergoes macrocyclization with the N-terminus of the modified core peptide. Peptide backbone alpha-N-methylations change the physicochemical properties of amide bonds to provide structural constraints and other favorable characteristics including biological membrane permeability to peptides.

Its pathway is secondary metabolite biosynthesis. In terms of biological role, fusion protein of the methyltransferase gjuM and the type I borosin core peptide; part of the gene cluster that mediates the biosynthesis of a type I borosin, a highly methylated cyclic peptide with potent biological activities. Type I borosins derive from the C-terminus of the fusion protein, and it is the same protein that methylates its own C-terminus using S-adenosyl methionine (SAM). The C-terminus is subsequently cleaved off and macrocyclized by a prolyloligopeptidase to give the final product. This is Methyltransferase/ribosomally synthesized type I borosin cyclic peptide precursor gjuMa from Gymnopilus junonius (Spectacular rustgill mushroom).